The sequence spans 80 residues: Waprin-Phi3 (80 aa).

An N-terminal signal peptide occupies residues methionine 1–alanine 22. One can recognise a WAP domain in the interval proline 31 to glycine 78. 4 disulfides stabilise this stretch: cysteine 38-cysteine 66, cysteine 49-cysteine 70, cysteine 53-cysteine 65, and cysteine 59-cysteine 74.

The protein belongs to the venom waprin family. As to expression, expressed by the venom gland.

Its subcellular location is the secreted. Functionally, damages membranes of susceptible bacteria. Has no hemolytic activity. Not toxic to mice. Does not inhibit the proteinases elastase and cathepsin G. This is Waprin-Phi3 from Philodryas olfersii (Green snake).